The following is a 421-amino-acid chain: Glutamate-1-semialdehyde 2,1-aminomutase (421 aa).

Residue lysine 261 is modified to N6-(pyridoxal phosphate)lysine.

This sequence belongs to the class-III pyridoxal-phosphate-dependent aminotransferase family. HemL subfamily. Pyridoxal 5'-phosphate is required as a cofactor.

It is found in the cytoplasm. The enzyme catalyses (S)-4-amino-5-oxopentanoate = 5-aminolevulinate. Its pathway is porphyrin-containing compound metabolism; protoporphyrin-IX biosynthesis; 5-aminolevulinate from L-glutamyl-tRNA(Glu): step 2/2. The chain is Glutamate-1-semialdehyde 2,1-aminomutase (hemL) from Thermoplasma acidophilum (strain ATCC 25905 / DSM 1728 / JCM 9062 / NBRC 15155 / AMRC-C165).